A 335-amino-acid chain; its full sequence is Anthranilate phosphoribosyltransferase (335 aa).

5-phospho-alpha-D-ribose 1-diphosphate contacts are provided by residues G79, 82–83 (GD), S87, 89–92 (NIST), 107–115 (KHGNRSISS), and S119. An anthranilate-binding site is contributed by G79. S91 serves as a coordination point for Mg(2+). N110 provides a ligand contact to anthranilate. R165 lines the anthranilate pocket. Residues D224 and E225 each contribute to the Mg(2+) site.

This sequence belongs to the anthranilate phosphoribosyltransferase family. As to quaternary structure, homodimer. Requires Mg(2+) as cofactor.

It carries out the reaction N-(5-phospho-beta-D-ribosyl)anthranilate + diphosphate = 5-phospho-alpha-D-ribose 1-diphosphate + anthranilate. Its pathway is amino-acid biosynthesis; L-tryptophan biosynthesis; L-tryptophan from chorismate: step 2/5. Its function is as follows. Catalyzes the transfer of the phosphoribosyl group of 5-phosphorylribose-1-pyrophosphate (PRPP) to anthranilate to yield N-(5'-phosphoribosyl)-anthranilate (PRA). This is Anthranilate phosphoribosyltransferase from Streptococcus mutans serotype c (strain ATCC 700610 / UA159).